We begin with the raw amino-acid sequence, 170 residues long: Lipoprotein signal peptidase (170 aa).

Helical transmembrane passes span 9 to 29, 72 to 92, and 94 to 114; these read FNIF…KYLV, IFFL…SLKE, and NCIA…NVID. Residues aspartate 124 and aspartate 146 contribute to the active site. Residues 143 to 163 form a helical membrane-spanning segment; that stretch reads NFADSYVVIGMILFLVYDFFI.

The protein belongs to the peptidase A8 family.

It is found in the cell inner membrane. It catalyses the reaction Release of signal peptides from bacterial membrane prolipoproteins. Hydrolyzes -Xaa-Yaa-Zaa-|-(S,diacylglyceryl)Cys-, in which Xaa is hydrophobic (preferably Leu), and Yaa (Ala or Ser) and Zaa (Gly or Ala) have small, neutral side chains.. The protein operates within protein modification; lipoprotein biosynthesis (signal peptide cleavage). This protein specifically catalyzes the removal of signal peptides from prolipoproteins. The polypeptide is Lipoprotein signal peptidase (Borreliella burgdorferi (strain ATCC 35210 / DSM 4680 / CIP 102532 / B31) (Borrelia burgdorferi)).